The primary structure comprises 284 residues: L-ribulose-5-phosphate 3-epimerase UlaE (284 aa).

The protein belongs to the L-ribulose-5-phosphate 3-epimerase family.

The catalysed reaction is L-ribulose 5-phosphate = L-xylulose 5-phosphate. The protein operates within cofactor degradation; L-ascorbate degradation; D-xylulose 5-phosphate from L-ascorbate: step 3/4. Its function is as follows. Catalyzes the isomerization of L-xylulose-5-phosphate to L-ribulose-5-phosphate. Is involved in the anaerobic L-ascorbate utilization. In Salmonella dublin (strain CT_02021853), this protein is L-ribulose-5-phosphate 3-epimerase UlaE.